We begin with the raw amino-acid sequence, 189 residues long: FAS1 domain-containing protein mug57 (189 aa).

The first 24 residues, 1–24 (MMKLFCLNIFRFLYTTSFISAVLS), serve as a signal peptide directing secretion. The 146-residue stretch at 37–182 (EPRLFELLAE…GEMWVLNATL (146 aa)) folds into the FAS1 domain.

It localises to the cytoplasm. The protein localises to the nucleus. Its subcellular location is the membrane. Has a role in sporulation. This is FAS1 domain-containing protein mug57 (mug57) from Schizosaccharomyces pombe (strain 972 / ATCC 24843) (Fission yeast).